The sequence spans 368 residues: BTB/POZ and TAZ domain-containing protein 5 (368 aa).

The interval 1–25 (MENMDDFSPENVLAPPPPPPPMKKS) is disordered. In terms of domain architecture, BTB spans 55-123 (ADVLIHTDDN…LYSSCYEKQD (69 aa)). The segment at 233–324 (QTYTQLYEAM…SEQCKVPLCS (92 aa)) adopts a TAZ-type zinc-finger fold. The segment at 335 to 358 (RKDEKRWKLLVRNVLSTKRIGGSP) is caM-binding.

As to quaternary structure, interacts with CUL3A. As to expression, preferentially expressed in young leaves, roots and stems.

The protein resides in the cytoplasm. The protein operates within protein modification; protein ubiquitination. May act as a substrate-specific adapter of an E3 ubiquitin-protein ligase complex (CUL3-RBX1-BTB) which mediates the ubiquitination and subsequent proteasomal degradation of target proteins. The protein is BTB/POZ and TAZ domain-containing protein 5 (BT5) of Arabidopsis thaliana (Mouse-ear cress).